A 521-amino-acid polypeptide reads, in one-letter code: Ribonuclease Y (521 aa).

The chain crosses the membrane as a helical span at residues 3-23 (VSIWMLVITVLAAVAAYFAGS). Residues 211 to 271 (TVSVVPLPSD…VRREVARMSL (61 aa)) enclose the KH domain. Positions 337–430 (IYQHSLEVAF…VQAADALSGA (94 aa)) constitute an HD domain.

Belongs to the RNase Y family.

It localises to the cell membrane. In terms of biological role, endoribonuclease that initiates mRNA decay. This is Ribonuclease Y from Pelobacter propionicus (strain DSM 2379 / NBRC 103807 / OttBd1).